A 205-amino-acid chain; its full sequence is Fibroblast growth factor homolog (205 aa).

Residues 1–17 form the signal peptide; sequence MHRLALVVATVAYLCAG.

Belongs to the heparin-binding growth factors family.

The polypeptide is Fibroblast growth factor homolog (FGF) (Orgyia pseudotsugata multicapsid polyhedrosis virus (OpMNPV)).